Here is a 160-residue protein sequence, read N- to C-terminus: Transcription elongation factor GreA (160 aa).

Residues 1 to 72 are a coiled coil; that stretch reads MAEKTYPMTL…QISSLETKIR (72 aa).

This sequence belongs to the GreA/GreB family.

In terms of biological role, necessary for efficient RNA polymerase transcription elongation past template-encoded arresting sites. The arresting sites in DNA have the property of trapping a certain fraction of elongating RNA polymerases that pass through, resulting in locked ternary complexes. Cleavage of the nascent transcript by cleavage factors such as GreA or GreB allows the resumption of elongation from the new 3'terminus. GreA releases sequences of 2 to 3 nucleotides. This chain is Transcription elongation factor GreA, found in Streptococcus pneumoniae (strain ATCC 700669 / Spain 23F-1).